Reading from the N-terminus, the 363-residue chain is Peptide chain release factor 1 (363 aa).

Position 237 is an N5-methylglutamine (Gln-237). Positions 287–299 are enriched in basic and acidic residues; that stretch reads EQHKEQASTRKEL. The disordered stretch occupies residues 287-306; the sequence is EQHKEQASTRKELIGSGDRS.

This sequence belongs to the prokaryotic/mitochondrial release factor family. Methylated by PrmC. Methylation increases the termination efficiency of RF1.

It is found in the cytoplasm. Its function is as follows. Peptide chain release factor 1 directs the termination of translation in response to the peptide chain termination codons UAG and UAA. This chain is Peptide chain release factor 1, found in Ruthia magnifica subsp. Calyptogena magnifica.